Reading from the N-terminus, the 118-residue chain is Large ribosomal subunit protein bL20 (118 aa).

Belongs to the bacterial ribosomal protein bL20 family.

Its function is as follows. Binds directly to 23S ribosomal RNA and is necessary for the in vitro assembly process of the 50S ribosomal subunit. It is not involved in the protein synthesizing functions of that subunit. This Thermotoga petrophila (strain ATCC BAA-488 / DSM 13995 / JCM 10881 / RKU-1) protein is Large ribosomal subunit protein bL20.